Reading from the N-terminus, the 187-residue chain is Mast cell-expressed membrane protein 1 (187 aa).

Topologically, residues 1–85 are cytoplasmic; it reads MEVEEIYKHQ…PCWLYRAILS (85 aa). Residues 49–71 are disordered; that stretch reads DHAKGGHSRPTSQVPAQCRPPSD. Residues 86-106 form a helical; Signal-anchor for type II membrane protein membrane-spanning segment; sequence LYILLALAFVLCIILSAFIMV. Residues 107–187 lie on the Extracellular side of the membrane; it reads KNAEMSKELL…LQKMPQSSPQ (81 aa). Residue Asn-124 is glycosylated (N-linked (GlcNAc...) asparagine).

In terms of tissue distribution, expressed specifically in mast cells. Found primarily in lung.

It localises to the membrane. This Homo sapiens (Human) protein is Mast cell-expressed membrane protein 1.